The sequence spans 240 residues: LexA repressor (240 aa).

A DNA-binding region (H-T-H motif) is located at residues 26–46 (FDEMKEALDLASKSGIHRLIT). Residues Ser161 and Lys199 each act as for autocatalytic cleavage activity in the active site.

This sequence belongs to the peptidase S24 family. Homodimer.

The enzyme catalyses Hydrolysis of Ala-|-Gly bond in repressor LexA.. Functionally, represses a number of genes involved in the response to DNA damage (SOS response), including recA and lexA. In the presence of single-stranded DNA, RecA interacts with LexA causing an autocatalytic cleavage which disrupts the DNA-binding part of LexA, leading to derepression of the SOS regulon and eventually DNA repair. The protein is LexA repressor of Brucella ovis (strain ATCC 25840 / 63/290 / NCTC 10512).